The primary structure comprises 228 residues: UPF0056 membrane protein MJ0972 (228 aa).

The next 5 helical transmembrane spans lie at 22–42 (FYIY…LIPI), 68–88 (VVLL…GITI), 133–153 (VPLA…MILI), 163–183 (GVVV…LSLT), and 201–221 (IMGL…IVGL).

This sequence belongs to the UPF0056 (MarC) family.

The protein localises to the cell membrane. This chain is UPF0056 membrane protein MJ0972, found in Methanocaldococcus jannaschii (strain ATCC 43067 / DSM 2661 / JAL-1 / JCM 10045 / NBRC 100440) (Methanococcus jannaschii).